The chain runs to 562 residues: Long-chain-fatty-acid--CoA ligase (562 aa).

This sequence belongs to the ATP-dependent AMP-binding enzyme family. It depends on Mg(2+) as a cofactor.

Its subcellular location is the membrane. It catalyses the reaction a long-chain fatty acid + ATP + CoA = a long-chain fatty acyl-CoA + AMP + diphosphate. Its pathway is lipid metabolism; fatty acid beta-oxidation. In terms of biological role, catalyzes the esterification, concomitant with transport, of exogenous long-chain fatty acids into metabolically active CoA thioesters for subsequent degradation or incorporation into phospholipids. The chain is Long-chain-fatty-acid--CoA ligase (fadD) from Haemophilus influenzae (strain ATCC 51907 / DSM 11121 / KW20 / Rd).